Reading from the N-terminus, the 459-residue chain is MPHNSIRSGHGGLNQLGGAFVNGRPLPEVVRQRIVDLAHQGVRPCDISRQLRVSHGCVSKILGRYYETGSIRPGVIGGSKPKVATPKVVEKIGDYKRQNPTMFAWEIRDRLLAEGVCDNDTVPSVSSINRIIRTKVQQPFNLPMDSCVATKSLSPGHTLIPSSAVTPPESPQSDSLGSTYSINGLLGIAQPGSDSKRKMDDSDQDSCRLSIDSQSSSSGPRKHLRTDAFSQHHLEPLECPFERQHYPEAYASPSHTKGEQGLYPLPLLNSAALDDGKATLTPSNTPLGRNLSTHQTYPVVADPHSPFAIKQETPEVSSSSSTPSSLSSSAFLDLQQVGGAGVPAGASVPPFNAFPHAASVYGQFTGQALLSGREMVGPTLPGYPPHIPTSGQGSYASSAIAGMVAGSEYSGNAYGHTPYSSYGEAWRFPNSSLLSSPYYYSSTSRPSAPPTTATAFDHL.

Positions 9–135 form a DNA-binding region, paired; that stretch reads GHGGLNQLGG…SSINRIIRTK (127 aa). The interval 12–68 is PAI subdomain; it reads GLNQLGGAFVNGRPLPEVVRQRIVDLAHQGVRPCDISRQLRVSHGCVSKILGRYYET. The RED subdomain stretch occupies residues 87-135; that stretch reads KVVEKIGDYKRQNPTMFAWEIRDRLLAEGVCDNDTVPSVSSINRIIRTK. Positions 159–182 are enriched in polar residues; the sequence is LIPSSAVTPPESPQSDSLGSTYSI. Residues 159 to 223 form a disordered region; that stretch reads LIPSSAVTPP…QSSSSGPRKH (65 aa). Position 305 is a phosphoserine (S305).

Interacts with WWTR1.

The protein localises to the nucleus. Its function is as follows. Thought to encode a transcription factor. It may have a role in kidney cell differentiation. May play a regulatory role in mammalian development. This chain is Paired box protein Pax-8 (PAX8), found in Canis lupus familiaris (Dog).